A 101-amino-acid polypeptide reads, in one-letter code: Urease subunit beta (101 aa).

It belongs to the urease beta subunit family. Heterotrimer of UreA (gamma), UreB (beta) and UreC (alpha) subunits. Three heterotrimers associate to form the active enzyme.

It localises to the cytoplasm. It catalyses the reaction urea + 2 H2O + H(+) = hydrogencarbonate + 2 NH4(+). The protein operates within nitrogen metabolism; urea degradation; CO(2) and NH(3) from urea (urease route): step 1/1. The sequence is that of Urease subunit beta from Rhodopseudomonas palustris (strain HaA2).